The primary structure comprises 387 residues: NAD(P)H oxidoreductase RTN4IP1, mitochondrial (387 aa).

The N-terminal 27 residues, methionine 1 to threonine 27, are a transit peptide targeting the mitochondrion. An Enoyl reductase (ER) domain is found at glycine 38 to valine 379. NADPH contacts are provided by serine 200, glycine 202, valine 203, serine 223, tyrosine 241, leucine 286, glycine 327, phenylalanine 329, histidine 372, alanine 373, and arginine 374.

The protein belongs to the zinc-containing alcohol dehydrogenase family. Quinone oxidoreductase subfamily.

Its subcellular location is the mitochondrion matrix. It is found in the mitochondrion outer membrane. It carries out the reaction a 3-demethylubiquinone + NADH + 2 H(+) = a 3-demethylubiquinol + NAD(+). It catalyses the reaction a 3-demethylubiquinone + NADPH + 2 H(+) = a 3-demethylubiquinol + NADP(+). The enzyme catalyses 3-demethylubiquinone-10 + NADH + 2 H(+) = 3-demethylubiquinol-10 + NAD(+). The catalysed reaction is 3-demethylubiquinone-10 + NADPH + 2 H(+) = 3-demethylubiquinol-10 + NADP(+). The protein operates within cofactor biosynthesis; ubiquinone biosynthesis. In terms of biological role, NAD(P)H oxidoreductase involved in the ubiquinone biosynthetic pathway. Required for the O-methyltransferase activity of COQ3. Able to catalyze the oxidoreduction of 3-demethylubiquinone into 3-demethylubiquinol in vitro. However, it is unclear if 3-demethylubiquinone constitutes a substrate in vivo. May also play a role in the regulation of retinal ganglion cell (RGC) neurite outgrowth, and hence in the development of the inner retina and optic nerve. In Danio rerio (Zebrafish), this protein is NAD(P)H oxidoreductase RTN4IP1, mitochondrial (rtn4ip1).